The sequence spans 315 residues: NAD-dependent protein deacylase sirtuin-5, mitochondrial (315 aa).

A mitochondrion-targeting transit peptide spans 1–39 (MSLLHFATRRLILQVLRELGLKAPPVHKTLKICIAMSRP). The Deacetylase sirtuin-type domain maps to 40 to 312 (SSNMADFRRF…PEALSPHESE (273 aa)). 61–80 (GAGVSAESGVPTFRGPGGFW) is a binding site for NAD(+). Positions 105 and 108 each coordinate substrate. 143-146 (QNID) contributes to the NAD(+) binding site. The active-site Proton acceptor is His161. Residues 254-256 (GTS), 280-282 (NTV), and Cys298 contribute to the NAD(+) site.

The protein belongs to the sirtuin family. Class III subfamily. In terms of assembly, monomer. Homodimer. Interacts with CPS1.

It localises to the mitochondrion. The protein resides in the cytoplasm. It is found in the cytosol. Its subcellular location is the nucleus. It carries out the reaction N(6)-malonyl-L-lysyl-[protein] + NAD(+) + H2O = 2''-O-malonyl-ADP-D-ribose + nicotinamide + L-lysyl-[protein]. The enzyme catalyses N(6)-succinyl-L-lysyl-[protein] + NAD(+) + H2O = 2''-O-succinyl-ADP-D-ribose + nicotinamide + L-lysyl-[protein]. It catalyses the reaction N(6)-glutaryl-L-lysyl-[protein] + NAD(+) + H2O = 2''-O-glutaryl-ADP-D-ribose + nicotinamide + L-lysyl-[protein]. Functionally, NAD-dependent lysine demalonylase, desuccinylase and deglutarylase that specifically removes malonyl, succinyl and glutaryl groups on target proteins. Activates CPS1 and contributes to the regulation of blood ammonia levels during prolonged fasting: acts by mediating desuccinylation and deglutarylation of CPS1, thereby increasing CPS1 activity in response to elevated NAD levels during fasting. Activates SOD1 by mediating its desuccinylation, leading to reduced reactive oxygen species. Activates SHMT2 by mediating its desuccinylation. Modulates ketogenesis through the desuccinylation and activation of HMGCS2. Has weak NAD-dependent protein deacetylase activity; however this activity may not be physiologically relevant in vivo. Can deacetylate cytochrome c (CYCS) and a number of other proteins in vitro such as UOX. The sequence is that of NAD-dependent protein deacylase sirtuin-5, mitochondrial from Monodelphis domestica (Gray short-tailed opossum).